The primary structure comprises 228 residues: Large ribosomal subunit protein uL1 (228 aa).

Belongs to the universal ribosomal protein uL1 family. As to quaternary structure, part of the 50S ribosomal subunit.

In terms of biological role, binds directly to 23S rRNA. The L1 stalk is quite mobile in the ribosome, and is involved in E site tRNA release. Functionally, protein L1 is also a translational repressor protein, it controls the translation of the L11 operon by binding to its mRNA. This is Large ribosomal subunit protein uL1 from Clavibacter sepedonicus (Clavibacter michiganensis subsp. sepedonicus).